We begin with the raw amino-acid sequence, 389 residues long: Chaperone protein DnaJ (389 aa).

A J domain is found at 5–79 (KRDYYEVLGI…RKLYDQFGHE (75 aa)). A CR-type zinc finger spans residues 151–234 (GCNKTIKYER…CRSNKYTVTN (84 aa)). Residues Cys164, Cys167, Cys182, Cys185, Cys208, Cys211, Cys222, and Cys225 each coordinate Zn(2+). CXXCXGXG motif repeat units follow at residues 164–171 (CHSCNGFG), 182–189 (CKDCNGNG), 208–215 (CSTCNGQG), and 222–229 (CKTCRSNK).

The protein belongs to the DnaJ family. In terms of assembly, homodimer. Zn(2+) is required as a cofactor.

Its subcellular location is the cytoplasm. Functionally, participates actively in the response to hyperosmotic and heat shock by preventing the aggregation of stress-denatured proteins and by disaggregating proteins, also in an autonomous, DnaK-independent fashion. Unfolded proteins bind initially to DnaJ; upon interaction with the DnaJ-bound protein, DnaK hydrolyzes its bound ATP, resulting in the formation of a stable complex. GrpE releases ADP from DnaK; ATP binding to DnaK triggers the release of the substrate protein, thus completing the reaction cycle. Several rounds of ATP-dependent interactions between DnaJ, DnaK and GrpE are required for fully efficient folding. Also involved, together with DnaK and GrpE, in the DNA replication of plasmids through activation of initiation proteins. This is Chaperone protein DnaJ from Mycoplasma genitalium (strain ATCC 33530 / DSM 19775 / NCTC 10195 / G37) (Mycoplasmoides genitalium).